Here is a 602-residue protein sequence, read N- to C-terminus: Beta-(1--&gt;2)glucan export ATP-binding/permease protein NdvA (602 aa).

An ABC transmembrane type-1 domain is found at 21-306; it reads GWLLAFANLL…VVSFINNVFM (286 aa). The next 6 helical transmembrane spans lie at 22 to 42, 63 to 83, 141 to 161, 163 to 183, 240 to 262, and 280 to 300; these read WLLAFANLLLAASQFAEPVLF, FLAAWVAFGLFTIACSALVAL, EHFAAILSVVVLLPLSLYLNW, LAILLFVLCIVFTALTTFVVR, VLSWWALVTVITRASTTITVLAI, and IVMFVSFATLLIQKLEQVVSF. In terms of domain architecture, ABC transporter spans 340 to 573; sequence VEFNDVTFSY…GGHFAELARA (234 aa). Residue 373-380 coordinates ATP; that stretch reads GPTGAGKS.

It belongs to the ABC transporter superfamily. Beta-(1--&gt;2)glucan exporter (TC 3.A.1.108.1) family. In terms of assembly, homodimer.

The protein localises to the cell inner membrane. It carries out the reaction [(1-&gt;2)-beta-D-glucosyl](n)(in) + ATP + H2O = [(1-&gt;2)-beta-D-glucosyl](n)(out) + ADP + phosphate + H(+). Involved in beta-(1--&gt;2)glucan export. Transmembrane domains (TMD) form a pore in the inner membrane and the ATP-binding domain (NBD) is responsible for energy generation. This is Beta-(1--&gt;2)glucan export ATP-binding/permease protein NdvA from Bradyrhizobium diazoefficiens (strain JCM 10833 / BCRC 13528 / IAM 13628 / NBRC 14792 / USDA 110).